The primary structure comprises 744 residues: 3-isopropylmalate dehydratase (744 aa).

Residues cysteine 341, cysteine 401, and cysteine 404 each contribute to the [4Fe-4S] cluster site.

The protein belongs to the aconitase/IPM isomerase family. Monomer. The cofactor is [4Fe-4S] cluster.

The enzyme catalyses (2R,3S)-3-isopropylmalate = (2S)-2-isopropylmalate. The protein operates within amino-acid biosynthesis; L-leucine biosynthesis; L-leucine from 3-methyl-2-oxobutanoate: step 2/4. Its function is as follows. Catalyzes the isomerization between 2-isopropylmalate and 3-isopropylmalate, via the formation of 2-isopropylmaleate. The polypeptide is 3-isopropylmalate dehydratase (leu1) (Phycomyces blakesleeanus (strain ATCC 8743b / DSM 1359 / FGSC 10004 / NBRC 33097 / NRRL 1555)).